The following is a 415-amino-acid chain: L-cysteine:1D-myo-inositol 2-amino-2-deoxy-alpha-D-glucopyranoside ligase (415 aa).

Cys-43 serves as a coordination point for Zn(2+). Residues 43–46 (CGIT), Thr-58, and 81–83 (NVT) contribute to the L-cysteinyl-5'-AMP site. A 'HIGH' region motif is present at residues 45 to 55 (ITPYDATHLGH). Residues 187–192 (ERGGDP) carry the 'ERGGDP' region motif. Trp-227 provides a ligand contact to L-cysteinyl-5'-AMP. Cys-231 is a binding site for Zn(2+). 249–251 (GSD) lines the L-cysteinyl-5'-AMP pocket. His-256 is a Zn(2+) binding site. Ile-283 lines the L-cysteinyl-5'-AMP pocket. A 'KMSKS' region motif is present at residues 289–293 (KMSKS).

It belongs to the class-I aminoacyl-tRNA synthetase family. MshC subfamily. In terms of assembly, monomer. The cofactor is Zn(2+).

The enzyme catalyses 1D-myo-inositol 2-amino-2-deoxy-alpha-D-glucopyranoside + L-cysteine + ATP = 1D-myo-inositol 2-(L-cysteinylamino)-2-deoxy-alpha-D-glucopyranoside + AMP + diphosphate + H(+). Functionally, catalyzes the ATP-dependent condensation of GlcN-Ins and L-cysteine to form L-Cys-GlcN-Ins. This chain is L-cysteine:1D-myo-inositol 2-amino-2-deoxy-alpha-D-glucopyranoside ligase, found in Saccharomonospora viridis (strain ATCC 15386 / DSM 43017 / JCM 3036 / CCUG 5913 / NBRC 12207 / NCIMB 9602 / P101) (Thermoactinomyces viridis).